The chain runs to 315 residues: Glutamine synthetase nodule isozyme (315 aa).

Positions 19 to 99 (IIAEYIWVGG…VICDTYTPSG (81 aa)) constitute a GS beta-grasp domain. The region spanning 106 to 315 (KRHAAAKIFS…WGVANRGASI (210 aa)) is the GS catalytic domain.

The protein belongs to the glutamine synthetase family. Homooctamer.

It is found in the cytoplasm. The enzyme catalyses L-glutamate + NH4(+) + ATP = L-glutamine + ADP + phosphate + H(+). This Lupinus angustifolius (Narrow-leaved blue lupine) protein is Glutamine synthetase nodule isozyme.